Consider the following 245-residue polypeptide: tRNA1(Val) (adenine(37)-N6)-methyltransferase (245 aa).

It belongs to the methyltransferase superfamily. tRNA (adenine-N(6)-)-methyltransferase family.

It is found in the cytoplasm. The enzyme catalyses adenosine(37) in tRNA1(Val) + S-adenosyl-L-methionine = N(6)-methyladenosine(37) in tRNA1(Val) + S-adenosyl-L-homocysteine + H(+). Specifically methylates the adenine in position 37 of tRNA(1)(Val) (anticodon cmo5UAC). The sequence is that of tRNA1(Val) (adenine(37)-N6)-methyltransferase from Escherichia coli O7:K1 (strain IAI39 / ExPEC).